We begin with the raw amino-acid sequence, 390 residues long: Chaperone protein DnaJ (390 aa).

One can recognise a J domain in the interval 6 to 70 (DYYEILGVPR…QKRAQYDQFG (65 aa)). The segment at 146-228 (GSEKEIYVTR…CHGTGKVRRK (83 aa)) adopts a CR-type zinc-finger fold. Positions 159, 162, 176, 179, 202, 205, 216, and 219 each coordinate Zn(2+). 4 CXXCXGXG motif repeats span residues 159–166 (CPTCKGKG), 176–183 (CDMCNGTG), 202–209 (CPKCHGTG), and 216–223 (CHECHGTG).

The protein belongs to the DnaJ family. As to quaternary structure, homodimer. Zn(2+) serves as cofactor.

The protein localises to the cytoplasm. Functionally, participates actively in the response to hyperosmotic and heat shock by preventing the aggregation of stress-denatured proteins and by disaggregating proteins, also in an autonomous, DnaK-independent fashion. Unfolded proteins bind initially to DnaJ; upon interaction with the DnaJ-bound protein, DnaK hydrolyzes its bound ATP, resulting in the formation of a stable complex. GrpE releases ADP from DnaK; ATP binding to DnaK triggers the release of the substrate protein, thus completing the reaction cycle. Several rounds of ATP-dependent interactions between DnaJ, DnaK and GrpE are required for fully efficient folding. Also involved, together with DnaK and GrpE, in the DNA replication of plasmids through activation of initiation proteins. The polypeptide is Chaperone protein DnaJ (Dictyoglomus thermophilum (strain ATCC 35947 / DSM 3960 / H-6-12)).